A 487-amino-acid chain; its full sequence is NADH-quinone oxidoreductase subunit N (487 aa).

13 consecutive transmembrane segments (helical) span residues 18 to 38 (LVPE…DLFV), 44 to 64 (VWTH…LATG), 84 to 104 (VMKT…WTYL), 116 to 136 (VLVL…SLLM), 169 to 189 (FVLG…VYGA), 211 to 231 (LLTG…AAPF), 242 to 262 (APAP…FGMA), 277 to 297 (WHLL…LMAI), 305 to 325 (MLAY…AGGG), 333 to 353 (MFYA…IIAL), 377 to 397 (AGLV…LGFW), 410 to 430 (DMLW…YYYL), and 457 to 477 (VLGV…PIMV).

It belongs to the complex I subunit 2 family. In terms of assembly, NDH-1 is composed of 14 different subunits. Subunits NuoA, H, J, K, L, M, N constitute the membrane sector of the complex.

The protein resides in the cell inner membrane. The enzyme catalyses a quinone + NADH + 5 H(+)(in) = a quinol + NAD(+) + 4 H(+)(out). Functionally, NDH-1 shuttles electrons from NADH, via FMN and iron-sulfur (Fe-S) centers, to quinones in the respiratory chain. The immediate electron acceptor for the enzyme in this species is believed to be ubiquinone. Couples the redox reaction to proton translocation (for every two electrons transferred, four hydrogen ions are translocated across the cytoplasmic membrane), and thus conserves the redox energy in a proton gradient. This Xanthomonas euvesicatoria pv. vesicatoria (strain 85-10) (Xanthomonas campestris pv. vesicatoria) protein is NADH-quinone oxidoreductase subunit N.